A 149-amino-acid chain; its full sequence is Aquaporin-like protein 2 (149 aa).

Residues M1–S35 are disordered. Topologically, residues M1–H47 are cytoplasmic. A helical transmembrane segment spans residues F48 to I68. Over C69 to Q89 the chain is Extracellular. The helical transmembrane segment at L90–W110 threads the bilayer. The Cytoplasmic portion of the chain corresponds to G111–R149.

This sequence belongs to the MIP/aquaporin (TC 1.A.8) family.

It is found in the endoplasmic reticulum membrane. The protein localises to the cell membrane. Functionally, water channel required to facilitate the transport of water across membranes. Involved in freeze tolerance, osmotolerance and cell flocculation in liquid cultures. Is non-functional in most laboratory strains. This chain is Aquaporin-like protein 2 (AQY2-2), found in Saccharomyces cerevisiae (strain RM11-1a) (Baker's yeast).